Reading from the N-terminus, the 600-residue chain is Na(+)/dicarboxylate cotransporter 3 (600 aa).

Residues 1 to 16 (MAALAALAKKVWSARR) are Cytoplasmic-facing. Residues 17–37 (LLVLLLVPLALLPILFALPPK) traverse the membrane as a helical segment. Over 38–55 (EGRCLYVILLMAVYWCTE) the chain is Extracellular. The helical transmembrane segment at 56–76 (ALPLSVTALLPIILFPFMGIL) threads the bilayer. Topologically, residues 77–82 (PSSKVC) are cytoplasmic. Residues 83–103 (PQYFLDTNFLFLSGLIMASAI) traverse the membrane as a helical segment. Residues 104-137 (EERNLHRRIALKVLMLVGVQPARLILGMMVTTSF) are Extracellular-facing. Residues 138-158 (LSMWLSNTASTAMMLPIASAI) form a helical membrane-spanning segment. Topologically, residues 159-229 (LKSLFGQRDT…KEEEHRRNIW (71 aa)) are cytoplasmic. The chain crosses the membrane as a helical span at residues 230–250 (KGFLISIPYSASIGGTATLTG). Topologically, residues 251–278 (TAPNLILLGQLKSFFPQCDVVNFGSWFI) are extracellular. A helical transmembrane segment spans residues 279–299 (FAFPLMLLFLLVGWLWISFLY). The Cytoplasmic segment spans residues 300–336 (GGMSWRGWRKKNSKLQDVAEDKAKAVIQEEFQNLGPI). A helical membrane pass occupies residues 337–357 (KFAEQAVFILFCLFAILLFSR). Residues 358–372 (DPKFIPGWASLFAPG) lie on the Extracellular side of the membrane. Residues 373–393 (FVSDAVTGVAIVTILFFFPSQ) traverse the membrane as a helical segment. Residues 394–422 (KPSLKWWFDFKAPNSETEPLLSWKKAQET) lie on the Cytoplasmic side of the membrane. The helical intramembrane region spans 423–443 (VPWNIILLLGGGFAMAKGCEE). Topologically, residues 444–461 (SGLSAWIGGQLHPLEHVP) are cytoplasmic. A helical transmembrane segment spans residues 462-482 (PLLAVLLITVVIAFFTEFASN). Residues 483 to 505 (TATIIIFLPVLAELAIRLHVHPL) are Extracellular-facing. The helical transmembrane segment at 506 to 526 (YLMIPGTVSCSYAFMLPVSTP) threads the bilayer. The Cytoplasmic segment spans residues 527-546 (PNSIAFSTGHLLVKDMVRTG). A helical membrane pass occupies residues 547-567 (LLMNLMGVLLLSLAMNTWAQA). The Extracellular segment spans residues 568–600 (IFQLGTFPDWANTHAANVTALPPALTNNTVQTL). N-linked (GlcNAc...) asparagine glycosylation is found at Asn-584 and Asn-594.

The protein belongs to the SLC13A/DASS transporter (TC 2.A.47) family. NADC subfamily. In terms of tissue distribution, highly expressed in proximal parts of straight tubules in the kidney. Detected in placenta, in brain, and in liver. Strongly expressed within the meningeal layers of supporting tissue that surround the brain and relatively weakly expressed throughout the cerebral cortex, hippocampus, and cerebellum.

Its subcellular location is the cell membrane. The enzyme catalyses succinate(out) + 3 Na(+)(out) = succinate(in) + 3 Na(+)(in). It carries out the reaction 2-oxoglutarate(out) + 3 Na(+)(out) = 2-oxoglutarate(in) + 3 Na(+)(in). The catalysed reaction is N-acetyl-L-aspartate(out) + 3 Na(+)(out) = N-acetyl-L-aspartate(in) + 3 Na(+)(in). It catalyses the reaction glutarate(out) + 3 Na(+)(out) = glutarate(in) + 3 Na(+)(in). The enzyme catalyses fumarate(out) + 3 Na(+)(out) = fumarate(in) + 3 Na(+)(in). It carries out the reaction malate(out) + 3 Na(+)(out) = malate(in) + 3 Na(+)(in). The catalysed reaction is 2,2-dimethylsuccinate(out) + 3 Na(+)(out) = 2,2-dimethylsuccinate(in) + 3 Na(+)(in). It catalyses the reaction 2,3-dimethylsuccinate(out) + 3 Na(+)(out) = 2,3-dimethylsuccinate(in) + 3 Na(+)(in). The enzyme catalyses itaconate(out) + 3 Na(+)(out) = itaconate(in) + 3 Na(+)(in). Its activity is regulated as follows. Li(+) decreases succinate transport in the presence of Na(+). Functionally, high-affinity sodium-dicarboxylate cotransporter that accepts a range of substrates with 4-6 carbon atoms, such as the citric acid cycle intermediates succinate and alpha-ketoglutarate (2-oxoglutarate), as well as other compounds including N-acetyl-L-aspartate. Transports the dicarboxylate into the cell with a probable stoichiometry of 3 Na(+) for 1 divalent dicarboxylate, rendering the process electrogenic. Can transport citrate in a Na(+)-dependent manner, recognizing the divalent form of citrate rather than the trivalent form which is normally found in blood. Imports itaconate in hepatocytes leading to activation of TFEB-dependent lysosomal biogenesis involved in antibacterial innate immune response. This Rattus norvegicus (Rat) protein is Na(+)/dicarboxylate cotransporter 3 (Slc13a3).